Consider the following 705-residue polypeptide: Polyphosphate kinase (705 aa).

N58 is an ATP binding site. Mg(2+) is bound by residues R389 and R419. H449 (phosphohistidine intermediate) is an active-site residue. The ATP site is built by Y482, R578, and H606.

The protein belongs to the polyphosphate kinase 1 (PPK1) family. Mg(2+) is required as a cofactor. In terms of processing, an intermediate of this reaction is the autophosphorylated ppk in which a phosphate is covalently linked to a histidine residue through a N-P bond.

It carries out the reaction [phosphate](n) + ATP = [phosphate](n+1) + ADP. Its function is as follows. Catalyzes the reversible transfer of the terminal phosphate of ATP to form a long-chain polyphosphate (polyP). The chain is Polyphosphate kinase from Halalkalibacterium halodurans (strain ATCC BAA-125 / DSM 18197 / FERM 7344 / JCM 9153 / C-125) (Bacillus halodurans).